The chain runs to 420 residues: Succinate--CoA ligase [GDP-forming] subunit beta, mitochondrial (420 aa).

The ATP-grasp domain maps to 35 to 263; that stretch reads KSLMDKYGVN…NASFRQKEIF (229 aa). GTP is bound by residues Q46, 78 to 80, and V135; that span reads GRG. Mg(2+) contacts are provided by N232 and D246. Residues N297 and 354–356 each bind substrate; that span reads GIM.

Belongs to the succinate/malate CoA ligase beta subunit family. GTP-specific subunit beta subfamily. As to quaternary structure, heterodimer of an alpha and a beta subunit. The beta subunit determines specificity for GTP. Mg(2+) is required as a cofactor.

Its subcellular location is the mitochondrion. It catalyses the reaction GTP + succinate + CoA = succinyl-CoA + GDP + phosphate. It functions in the pathway carbohydrate metabolism; tricarboxylic acid cycle; succinate from succinyl-CoA (ligase route): step 1/1. Functionally, GTP-specific succinyl-CoA synthetase functions in the citric acid cycle (TCA), coupling the hydrolysis of succinyl-CoA to the synthesis of GTP and thus represents the only step of substrate-level phosphorylation in the TCA. The beta subunit provides nucleotide specificity of the enzyme and binds the substrate succinate, while the binding sites for coenzyme A and phosphate are found in the alpha subunit. The sequence is that of Succinate--CoA ligase [GDP-forming] subunit beta, mitochondrial (scsB) from Dictyostelium discoideum (Social amoeba).